A 147-amino-acid chain; its full sequence is 3-hydroxyacyl-[acyl-carrier-protein] dehydratase FabZ (147 aa).

Histidine 51 is an active-site residue.

The protein belongs to the thioester dehydratase family. FabZ subfamily.

The protein resides in the cytoplasm. The catalysed reaction is a (3R)-hydroxyacyl-[ACP] = a (2E)-enoyl-[ACP] + H2O. In terms of biological role, involved in unsaturated fatty acids biosynthesis. Catalyzes the dehydration of short chain beta-hydroxyacyl-ACPs and long chain saturated and unsaturated beta-hydroxyacyl-ACPs. This chain is 3-hydroxyacyl-[acyl-carrier-protein] dehydratase FabZ, found in Anaplasma marginale (strain Florida).